We begin with the raw amino-acid sequence, 526 residues long: Vang-like protein 1 (526 aa).

Low complexity predominate over residues 1-15 (MDTESTYSGYSYYSS). The interval 1–87 (MDTESTYSGY…TTAITGTSEH (87 aa)) is disordered. Topologically, residues 1 to 114 (MDTESTYSGY…VGLDCKRYLG (114 aa)) are cytoplasmic. Over residues 75-87 (GETTTAITGTSEH) the composition is skewed to polar residues. 2 positions are modified to phosphoserine: S88 and S90. Residues 115 to 135 (LTVASFLGLLVFLTPIAFILL) form a helical membrane-spanning segment. The Extracellular portion of the chain corresponds to 136–153 (PQILWREELKPCGAICEG). A helical transmembrane segment spans residues 154 to 174 (LLISVSFKLLILLIGTWALFF). Over 175-184 (RKQRADVPRV) the chain is Cytoplasmic. The chain crosses the membrane as a helical span at residues 185 to 205 (FVFRALLLVLIFLFVVSYWLF). Residues 206 to 224 (YGVRILDSRDQNYKDIVQY) lie on the Extracellular side of the membrane. The helical transmembrane segment at 225–245 (AVSLVDALLFIHYLAIVLLEL) threads the bilayer. Over 246–526 (RQLQPMFTLQ…VLRLQSETSV (281 aa)) the chain is Cytoplasmic.

This sequence belongs to the Vang family. In terms of assembly, heterodimer with Vangl2. Interacts through its C-terminal region with the N-terminal half of DVL1, DVL2 and DVL3. The PDZ domain of DVL1, DVL2 and DVL3 is required for the interaction.

Its subcellular location is the cell membrane. In Mus musculus (Mouse), this protein is Vang-like protein 1 (Vangl1).